Consider the following 433-residue polypeptide: Xylose isomerase (433 aa).

Residues histidine 99 and aspartate 102 contribute to the active site. Mg(2+) is bound by residues glutamate 230, glutamate 266, histidine 269, aspartate 294, aspartate 305, aspartate 307, and aspartate 337.

The protein belongs to the xylose isomerase family. In terms of assembly, homotetramer. Mg(2+) serves as cofactor.

It is found in the cytoplasm. It carries out the reaction alpha-D-xylose = alpha-D-xylulofuranose. This Cereibacter sphaeroides (strain ATCC 17029 / ATH 2.4.9) (Rhodobacter sphaeroides) protein is Xylose isomerase.